Consider the following 98-residue polypeptide: NADH-ubiquinone oxidoreductase chain 4L (98 aa).

Transmembrane regions (helical) follow at residues 1 to 21 (MPSI…GMLV), 29 to 49 (SLLC…LTAL), and 61 to 81 (IILL…LVMV).

Belongs to the complex I subunit 4L family. As to quaternary structure, core subunit of respiratory chain NADH dehydrogenase (Complex I) which is composed of 45 different subunits.

Its subcellular location is the mitochondrion inner membrane. It catalyses the reaction a ubiquinone + NADH + 5 H(+)(in) = a ubiquinol + NAD(+) + 4 H(+)(out). Core subunit of the mitochondrial membrane respiratory chain NADH dehydrogenase (Complex I) which catalyzes electron transfer from NADH through the respiratory chain, using ubiquinone as an electron acceptor. Part of the enzyme membrane arm which is embedded in the lipid bilayer and involved in proton translocation. The chain is NADH-ubiquinone oxidoreductase chain 4L (MT-ND4L) from Oryctolagus cuniculus (Rabbit).